The sequence spans 107 residues: Iron-binding protein IscA (107 aa).

Fe cation-binding residues include Cys35, Cys99, and Cys101.

Belongs to the HesB/IscA family. As to quaternary structure, homodimer; may form tetramers and higher multimers. The cofactor is Fe cation.

Its function is as follows. Is able to transfer iron-sulfur clusters to apo-ferredoxin. Multiple cycles of [2Fe2S] cluster formation and transfer are observed, suggesting that IscA acts catalytically. Recruits intracellular free iron so as to provide iron for the assembly of transient iron-sulfur cluster in IscU in the presence of IscS, L-cysteine and the thioredoxin reductase system TrxA/TrxB. The protein is Iron-binding protein IscA of Salmonella newport (strain SL254).